The chain runs to 55 residues: U17-myrmicitoxin-Mri1b (55 aa).

Residues 1–31 (MENSRTSTFTAYVTVAFLLISTFVTMVVTES) form the signal peptide. Position 32 is a pyrrolidone carboxylic acid (Q32).

In terms of processing, contains 1 disulfide bond. As to expression, expressed by the venom gland.

It localises to the secreted. The protein is U17-myrmicitoxin-Mri1b of Manica rubida (European giant red ant).